Consider the following 529-residue polypeptide: Glucocorticoid modulatory element-binding protein 2 (529 aa).

Positions 80-162 (EEGENLEAEI…RKIMDSGELD (83 aa)) constitute an SAND domain. Zn(2+) is bound at residue C109. Residues K135, K139, K142, and R153 each contribute to the DNA site. K154 is covalently cross-linked (Glycyl lysine isopeptide (Lys-Gly) (interchain with G-Cter in SUMO1); alternate). A Glycyl lysine isopeptide (Lys-Gly) (interchain with G-Cter in SUMO2); alternate cross-link involves residue K154. H166, C170, and C174 together coordinate Zn(2+). Residues 244–347 (LLDEVIQEFQ…HLSNVLMTLT (104 aa)) are a coiled coil. S372 is modified (phosphoserine).

Homodimer, and heterodimer of GMEB1 and GMEB2. Interacts with the glucocorticoid receptor (NR3C1). May interact with CREB-binding protein (CBP).

It is found in the nucleus. The protein localises to the cytoplasm. Trans-acting factor that binds to glucocorticoid modulatory elements (GME) present in the TAT (tyrosine aminotransferase) promoter and increases sensitivity to low concentrations of glucocorticoids. Also binds to the transferrin receptor promoter. The sequence is that of Glucocorticoid modulatory element-binding protein 2 (Gmeb2) from Rattus norvegicus (Rat).